The sequence spans 1028 residues: Pro-apoptotic serine protease nma111 (1028 aa).

The disordered stretch occupies residues 1-46 (MDLNGETSTKRKRSSVAAPAERPAKHLKPESSTLTPGDATPANGTV). A serine protease region spans residues 82-266 (VVSIHFCQTC…AATDYFLPLD (185 aa)). Catalysis depends on charge relay system residues H120, D151, and S233. 2 PDZ domains span residues 305-377 (PEWE…QRGG) and 876-957 (VFCG…VTFD). The segment at 989–1028 (TVSHDRDRHKDGITPDAANLNPDAMDEVYEEVSDVEPEVD) is disordered. A compositionally biased stretch (basic and acidic residues) spans 990-1001 (VSHDRDRHKDGI). Residues 1012-1028 (AMDEVYEEVSDVEPEVD) are compositionally biased toward acidic residues.

This sequence belongs to the peptidase S1C family.

The protein resides in the nucleus. Its function is as follows. Nuclear serine protease which mediates apoptosis. In Neosartorya fischeri (strain ATCC 1020 / DSM 3700 / CBS 544.65 / FGSC A1164 / JCM 1740 / NRRL 181 / WB 181) (Aspergillus fischerianus), this protein is Pro-apoptotic serine protease nma111 (nma111).